Consider the following 426-residue polypeptide: Gamma-glutamyl phosphate reductase (426 aa).

Belongs to the gamma-glutamyl phosphate reductase family.

The protein localises to the cytoplasm. The enzyme catalyses L-glutamate 5-semialdehyde + phosphate + NADP(+) = L-glutamyl 5-phosphate + NADPH + H(+). The protein operates within amino-acid biosynthesis; L-proline biosynthesis; L-glutamate 5-semialdehyde from L-glutamate: step 2/2. Its function is as follows. Catalyzes the NADPH-dependent reduction of L-glutamate 5-phosphate into L-glutamate 5-semialdehyde and phosphate. The product spontaneously undergoes cyclization to form 1-pyrroline-5-carboxylate. This Ralstonia nicotianae (strain ATCC BAA-1114 / GMI1000) (Ralstonia solanacearum) protein is Gamma-glutamyl phosphate reductase.